The sequence spans 148 residues: Cysteine-rich venom protein VAR6 (148 aa).

The first 22 residues, 1-22 (MILLKLYLTLAAILCQSRGTTS), serve as a signal peptide directing secretion. One can recognise an SCP domain in the interval 41–140 (NKHNDLRRTV…AGVMVGHYTQ (100 aa)).

Belongs to the CRISP family. In terms of processing, contains 8 disulfide bonds. In terms of tissue distribution, expressed by the venom gland.

It localises to the secreted. Its function is as follows. Blocks ryanodine receptors, and potassium channels. This Varanus acanthurus (Ridge-tailed monitor) protein is Cysteine-rich venom protein VAR6.